A 707-amino-acid polypeptide reads, in one-letter code: DCC-interacting protein 13-alpha (707 aa).

The required for RAB5A binding stretch occupies residues 1–428 (MPGIDKLPIE…PPTARTSSSG (428 aa)). The 266-residue stretch at 3 to 268 (GIDKLPIEET…DPLYLPDPDP (266 aa)) folds into the BAR domain. Residues 234 to 257 (QNVRREMDGDVETMQQTIEDLEVA) adopt a coiled-coil conformation. Residues 277–375 (LTRKAGYLNA…WICTINNISK (99 aa)) form the PH domain. 3 disordered regions span residues 397–433 (AVTP…LGSE), 466–490 (GQAK…STKS), and 636–707 (EKQK…ESEA). Thr-399 is modified (phosphothreonine). Ser-401 carries the phosphoserine modification. Positions 403-414 (SFQQRHESLRPG) match the F&amp;H motif. A Phosphoserine; by PKA modification is found at Ser-410. The PID domain occupies 495–655 (SILHQLFIVR…EKQQKELSKQ (161 aa)). Residues 620-670 (LAKQIALHAELDRRASEKQKEIERVKEKQQKELSKQKQIEKDLEEQSRLIA) adopt a coiled-coil conformation. Residues 636–666 (EKQKEIERVKEKQQKELSKQKQIEKDLEEQS) show a composition bias toward basic and acidic residues. The span at 679–691 (GSEGQLVLSSSQS) shows a compositional bias: low complexity. Ser-691 and Ser-694 each carry phosphoserine. Over residues 698–707 (EEGKKRESEA) the composition is skewed to basic and acidic residues.

As to quaternary structure, homodimer. Binds RAB5A/Rab5 through an N-terminal domain. This interaction is essential for its recruitment to endosomal membranes as well as its role in cell proliferation. Binds DCC and the catalytic domain of the inactive form of AKT2 through its PID domain. Binds PIK3CA and subunits of the NuRD/MeCP1 complex. Interacts with OCRL and INPP5B. Interacts with NTRK2. Interacts with APPL2; interaction is independent of follicle stimulating hormone stimulation; interaction is decreased by adiponectin in a time-dependent manner. Forms a complex with APPL2 and RUVBL2. Forms a complex comprising APPL2, RUVBL2, CTNNB1, HDAC1 and HDAC2; interaction reduces interaction between CTNNB1, HDAC1, HDAC2 and RUVBL2 leading to the decrease of deacetylase activity of this complex; affects the recruitment of repressive complexes to the Wnt target genes. Interacts with ANXA2. Interacts with TGFBR1; interaction is TGF beta dependent; mediates trafficking of the TGFBR1 from the endosomes to the nucleus via microtubules in a TRAF6-dependent manner. Interacts with PRKCZ. Interacts with PIK3R1 and APPL2. Interacts with ADIPOR1; ADIPOQ enhances this interaction; inhibites adiponectin-stimulated binding of APPL2 to ADIPOR1. In terms of processing, phosphorylation at Ser-410 by PKA severely impairs binding to OCRL. In terms of tissue distribution, expressed in insulin-target tissues including skeletal muscle, liver, fat, and brain.

It is found in the early endosome membrane. The protein resides in the nucleus. The protein localises to the cytoplasm. Its subcellular location is the endosome. It localises to the cell projection. It is found in the ruffle. The protein resides in the cytoplasmic vesicle. The protein localises to the phagosome. In terms of biological role, multifunctional adapter protein that binds to various membrane receptors, nuclear factors and signaling proteins to regulate many processes, such as cell proliferation, immune response, endosomal trafficking and cell metabolism. Regulates signaling pathway leading to cell proliferation through interaction with RAB5A and subunits of the NuRD/MeCP1 complex. Functions as a positive regulator of innate immune response via activation of AKT1 signaling pathway by forming a complex with APPL1 and PIK3R1. Inhibits Fc-gamma receptor-mediated phagocytosis through PI3K/Akt signaling in macrophages. Regulates TLR4 signaling in activated macrophages. Involved in trafficking of the TGFBR1 from the endosomes to the nucleus via microtubules in a TRAF6-dependent manner. Plays a role in cell metabolism by regulating adiponecting and insulin signaling pathways. Required for fibroblast migration through HGF cell signaling. Positive regulator of beta-catenin/TCF-dependent transcription through direct interaction with RUVBL2/reptin resulting in the relief of RUVBL2-mediated repression of beta-catenin/TCF target genes by modulating the interactions within the beta-catenin-reptin-HDAC complex. This chain is DCC-interacting protein 13-alpha, found in Mus musculus (Mouse).